Here is a 1168-residue protein sequence, read N- to C-terminus: MTILTTLIKEDNHFQDLNQVFGQANTLVTGLSPSAKVTMIAEKYAQSNQQLLLITNNLYQADKLETDLLQFIDAEELYKYPVQDIMTEEFSTQSPQLMSERIRTLTALAQGKKGLFIVPLNGLKKWLTSVEMWQNHQMTLRVGEDIDVDQFLNKLVNMGYKRESVVSHIGEFSLRGGIIDIFPLIGEPIRIELFDTEIDSIRDFDVETQRSKDNIEEVDITTASDYIITEEVIRHLKEELKTAYENTRPKIDKSVRNDLKETYESFKLFESTYFDHQILRRLVAFMYETPSTIIDYFQKDAIIAVDEFNRIKETEESLTVESDSFISNIIESGNGFIGQSFIKYDDFETLIEGYPVTYFSLFATTMPIKLNHIIKFSCKPVQQFYGQYDIMRSEFQRYVNQNYHIVVLVETETKVERMQAMLSEMHIPSITKLHRSMSSGQAVIIEGSLSEGFELPDMGLVVITERELFKSKQKKQRKRTKAISNAEKIKSYQDLNVGDYIVHVHHGVGRYLGVETLEVGQTHRDYIKLQYKGTDQLFVPVDQMDQVQKYVASEDKTPKLNKLGGSEWKKTKAKVQQSVEDIAEELIDLYKEREMAEGYQYGEDTAEQTTFELDFPYELTPDQAKSIDEIKDDMQKSRPMDRLLCGDVGYGKTEVAVRAAFKAVMEGKQVAFLVPTTILAQQHYETLIERMQDFPVEIQLMSRFRTPKEIKQTKEGLKTGFVDIVVGTHKLLSKDIQYKDLGLLIVDEEQRFGVRHKERIKTLKHNVDVLTLTATPIPRTLHMSMLGVRDLSVIETPPENRFPVQTYVLEQNMSFIKEALERELSRDGQVFYLYNKVQSIYEKREQLQMLMPDANIAVAHGQMTERDLEETMLSFINNEYDILVTTTIIETGVDVPNANTLIIEDADRFGLSQLYQLRGRVGRSSRIGYAYFLHPANKVLTETAEDRLQAIKEFTELGSGFKIAMRDLNIRGAGNLLGKQQHGFIDTVGFDLYSQMLEEAVNEKRGIKEPESEVPEVEVDLNLDAYLPTEYIANEQAKIEIYKKLRKTETFDQIIDIKDELIDRFNDYPVEVARLLDIVEIKVHALHSGITLIKDKGKIIDIHLSVKATENIDGEVLFKATQPLGRTMKVGVQNNAMTITLTKQNQWLDSLKFLVKCIEESMRISDEA.

The Helicase ATP-binding domain occupies 633–794 (DMQKSRPMDR…MLGVRDLSVI (162 aa)). Position 646-653 (646-653 (GDVGYGKT)) interacts with ATP. A DEEQ box motif is present at residues 747–750 (DEEQ). The Helicase C-terminal domain occupies 808 to 969 (VLEQNMSFIK…GFKIAMRDLN (162 aa)).

This sequence in the N-terminal section; belongs to the UvrB family. The protein in the C-terminal section; belongs to the helicase family. RecG subfamily.

The protein resides in the cytoplasm. In terms of biological role, couples transcription and DNA repair by recognizing RNA polymerase (RNAP) stalled at DNA lesions. Mediates ATP-dependent release of RNAP and its truncated transcript from the DNA, and recruitment of nucleotide excision repair machinery to the damaged site. This is Transcription-repair-coupling factor from Staphylococcus aureus (strain bovine RF122 / ET3-1).